Consider the following 380-residue polypeptide: Transcription factor Sox-17-alpha-A (380 aa).

Disordered stretches follow at residues 1 to 20 (MSSPDGGYASDDQNQGKCSV) and 40 to 59 (GEGKLKSDAGSANSRSKAEA). Residues 61-129 (IRRPMNAFMV…QHMQDHPNYK (69 aa)) constitute a DNA-binding region (HMG box). In terms of domain architecture, Sox C-terminal spans 264-379 (VSPVQGMMAC…TAVYYCNYPS (116 aa)). A disordered region spans residues 292-312 (HHQLHQAGQPSPPPEAQQMGR). The 9aaTAD motif lies at 328-336 (TEFEQYLSY). Residues 329-334 (EFEQYL) are required for transcriptional activity and interaction with ctnnb1.

Interacts (via C-terminus) with ctnnb1/beta-catenin (via Armadillo repeats); this interaction is required for inhibition of wnt-signaling. In early gastrulae, expressed in the vegetal but not animal hemisphere. The vegetal region is fated to become endoderm, and endodermal expression continues throughout gastrulation and neurulation. At tailbud stages, expression is down-regulated and becomes restricted to the most posterior endoderm and the future liver/gall bladder region. By 3-7 days, endodermal expression is restricted to the gall bladder bud. Also expressed in the embryonic gut, with strong expression in the posterior gut during tailbud stages, but by stage 40, expression rises again in the anterior gut. Expressed at a low level in the adult kidney and spleen.

It is found in the nucleus. Transcriptional activator. Binds to the DNA sequence 5'-AACAAT-3'. All of the sox17 proteins are required for embryonic endoderm development and gastrulation movements, and show some redundancy in function. In addition, the sox17 proteins have distinct but overlapping roles in later gut development. Acts downstream of vegt-signaling in endoderm differentiation to induce a range of endodermal genes both directly (including endodermin and dhh/chh) and indirectly. Also represses wnt-responsive genes to inhibit wnt/beta-catenin signaling. The chain is Transcription factor Sox-17-alpha-A (sox17a-a) from Xenopus laevis (African clawed frog).